We begin with the raw amino-acid sequence, 440 residues long: Frizzled/smoothened-like sans CRD protein D (440 aa).

Positions 1–27 are cleaved as a signal peptide; that stretch reads MFIILKFLISFFLICNFFNYNDHFASG. The Extracellular segment spans residues 28 to 85; the sequence is QTLPPGFCPSPLIYRNSTNRQNDIENGYLFIGQTNCTSPCPSLIFSENEWHRVYNMSL. N-linked (GlcNAc...) asparagine glycosylation is found at Asn43, Asn62, and Asn82. A helical transmembrane segment spans residues 86–106; the sequence is IAGTISMFALIFLIITYSPLV. Topologically, residues 107 to 110 are cytoplasmic; sequence NKYN. Residues 111 to 131 form a helical membrane-spanning segment; the sequence is GYTRHTVGILFLFCGIFLTVT. At 132-162 the chain is on the extracellular side; that stretch reads TDGRQLWDIDLGFEKYCPEPGRFARQSDTKC. A helical transmembrane segment spans residues 163 to 183; that stretch reads LVTAIFFQYGCVTSILWWAAI. Residues 184–200 lie on the Cytoplasmic side of the membrane; sequence SVDLWMTIRKVKISKLQ. Residues 201–221 form a helical membrane-spanning segment; the sequence is FITYAVILNIITLILTFAPIA. Residues 222–244 lie on the Extracellular side of the membrane; the sequence is SKQYGYGEAAIGCWLMDLKYQVG. A helical transmembrane segment spans residues 245 to 265; the sequence is YFWAPVGFCLCVGCVSIVLII. The Cytoplasmic portion of the chain corresponds to 266–285; the sequence is REIYKVSDAIKKKLLAKHLK. Residues 286–306 form a helical membrane-spanning segment; it reads PLMLIILMLSEFIYMFIFYSY. Residues 307-346 lie on the Extracellular side of the membrane; the sequence is TTSRRGHYHDVVEKYIRCLFINASNPSICEVDVSISSPAH. Asn328 is a glycosylation site (N-linked (GlcNAc...) asparagine). Residues 347 to 367 form a helical membrane-spanning segment; that stretch reads FFFHFCMRLMGIEGLIFFGFT. At 368–440 the chain is on the cytoplasmic side; it reads RQTKRIWLRS…IELSGVDSKN (73 aa). Residues 395 to 428 form a disordered region; that stretch reads ISSDEKTSNSSHRTTRGCRETEFGESIEQSNDPE.

Belongs to the G-protein coupled receptor Fz/Smo family.

It localises to the membrane. The chain is Frizzled/smoothened-like sans CRD protein D (fscD) from Dictyostelium discoideum (Social amoeba).